The sequence spans 249 residues: uncharacterized protein (249 aa).

This is an uncharacterized protein from Caenorhabditis elegans.